Reading from the N-terminus, the 184-residue chain is CASP-like protein 1U2 (184 aa).

Over 1 to 16 the chain is Cytoplasmic; that stretch reads MSYGCQVSDDEPNGSK. The chain crosses the membrane as a helical span at residues 17–37; sequence AVSLLLRLSTLALALTSAVVM. The Extracellular segment spans residues 38 to 62; the sequence is ATASECTVVQLNGVVATITYKDFPP. A helical transmembrane segment spans residues 63-83; the sequence is FVYLVGFNIAAAMLEAAAIYL. The Cytoplasmic segment spans residues 84–100; it reads RLSTGGGDDDDEGFKGK. A helical transmembrane segment spans residues 101 to 121; the sequence is LPGILLVVIDVAVQALVYTAT. Residues 122–153 are Extracellular-facing; it reads GGAFAAVSAYGPQINACGAGAGRFCGQVHQSK. A helical membrane pass occupies residues 154–174; sequence LLSFAGSAAVGLAVVFRDVSL. At 175–184 the chain is on the cytoplasmic side; sequence PFSLWPTSSD.

It belongs to the Casparian strip membrane proteins (CASP) family. In terms of assembly, homodimer and heterodimers.

The protein localises to the cell membrane. The protein is CASP-like protein 1U2 of Oryza sativa subsp. japonica (Rice).